A 476-amino-acid chain; its full sequence is Chromosomal replication initiator protein DnaA (476 aa).

Positions 1–73 are domain I, interacts with DnaA modulators; sequence MTNSEQERWS…LSAWQAEMPE (73 aa). The domain II stretch occupies residues 73–132; it reads EVHRIDLSVRTAMRCATPAKEAPAAVEARRPERSDAKPVSDARAPVMTPVAASHDALGGS. The segment at 92-115 is disordered; the sequence is KEAPAAVEARRPERSDAKPVSDAR. The span at 99-112 shows a compositional bias: basic and acidic residues; the sequence is EARRPERSDAKPVS. Residues 133 to 355 are domain III, AAA+ region; that stretch reads PLDPRLTFAS…GAINRLLAHS (223 aa). Residues G180, G182, K183, and T184 each coordinate ATP. Residues 356 to 476 form a domain IV, binds dsDNA region; that stretch reads KLNNQPVTLD…VESLKRQLQD (121 aa).

This sequence belongs to the DnaA family. As to quaternary structure, oligomerizes as a right-handed, spiral filament on DNA at oriC.

Its subcellular location is the cytoplasm. Functionally, plays an essential role in the initiation and regulation of chromosomal replication. ATP-DnaA binds to the origin of replication (oriC) to initiate formation of the DNA replication initiation complex once per cell cycle. Binds the DnaA box (a 9 base pair repeat at the origin) and separates the double-stranded (ds)DNA. Forms a right-handed helical filament on oriC DNA; dsDNA binds to the exterior of the filament while single-stranded (ss)DNA is stabiized in the filament's interior. The ATP-DnaA-oriC complex binds and stabilizes one strand of the AT-rich DNA unwinding element (DUE), permitting loading of DNA polymerase. After initiation quickly degrades to an ADP-DnaA complex that is not apt for DNA replication. Binds acidic phospholipids. This is Chromosomal replication initiator protein DnaA from Bradyrhizobium sp. (strain ORS 278).